The sequence spans 216 residues: Urease accessory protein UreG (216 aa).

25–32 (GPVGSGKT) is a binding site for GTP.

Belongs to the SIMIBI class G3E GTPase family. UreG subfamily. Homodimer. UreD, UreF and UreG form a complex that acts as a GTP-hydrolysis-dependent molecular chaperone, activating the urease apoprotein by helping to assemble the nickel containing metallocenter of UreC. The UreE protein probably delivers the nickel.

The protein resides in the cytoplasm. Functionally, facilitates the functional incorporation of the urease nickel metallocenter. This process requires GTP hydrolysis, probably effectuated by UreG. This Burkholderia mallei (strain NCTC 10247) protein is Urease accessory protein UreG.